Here is a 250-residue protein sequence, read N- to C-terminus: GPI-anchored hemophore PGA10 (250 aa).

A signal peptide spans 1–20 (MMSFSLLSIVSIALAATVSA). One can recognise a CFEM domain in the interval 26 to 137 (NAYTAYPSVA…DALAKAANAA (112 aa)). Cystine bridges form between Cys54/Cys94, Cys58/Cys89, Cys68/Cys75, and Cys77/Cys110. Position 72 (Asp72) interacts with heme. The tract at residues 165 to 219 (STSHESKVAETSVAQQTASTEKSSAAETSRAKETSKAEESSKAEETSVAQSSSSA) is disordered. Residues 178 to 192 (AQQTASTEKSSAAET) show a composition bias toward low complexity. The span at 193-209 (SRAKETSKAEESSKAEE) shows a compositional bias: basic and acidic residues. Residues 210–219 (TSVAQSSSSA) are compositionally biased toward low complexity. Asn230 is lipidated: GPI-anchor amidated asparagine. The propeptide at 231–250 (AGNMPVIAIGGVIAAFAALI) is removed in mature form.

The protein belongs to the RBT5 family. In terms of processing, the GPI-anchor is attached to the protein in the endoplasmic reticulum and serves to target the protein to the cell surface. There, the glucosamine-inositol phospholipid moiety is cleaved off and the GPI-modified mannoprotein is covalently attached via its lipidless GPI glycan remnant to the 1,6-beta-glucan of the outer cell wall layer. Mannosylated.

The protein localises to the secreted. It localises to the cell wall. The protein resides in the cell membrane. In terms of biological role, heme-binding protein involved in heme-iron utilization. The ability to acquire iron from host tissues is a major virulence factor of pathogenic microorganisms. Involved in biofilm formation. This is GPI-anchored hemophore PGA10 from Candida albicans (strain SC5314 / ATCC MYA-2876) (Yeast).